Consider the following 215-residue polypeptide: Large ribosomal subunit protein bL25 (215 aa).

Polar residues predominate over residues 1–10 (MAKSASNQLR). 2 disordered regions span residues 1–25 (MAKSASNQLRVTVRTETGKGASRRA) and 187–215 (ELEGEVAGAEEAEEAAVEAGEAEAAGESE).

It belongs to the bacterial ribosomal protein bL25 family. CTC subfamily. As to quaternary structure, part of the 50S ribosomal subunit; part of the 5S rRNA/L5/L18/L25 subcomplex. Contacts the 5S rRNA. Binds to the 5S rRNA independently of L5 and L18.

This is one of the proteins that binds to the 5S RNA in the ribosome where it forms part of the central protuberance. In Mycobacterium bovis (strain ATCC BAA-935 / AF2122/97), this protein is Large ribosomal subunit protein bL25.